The sequence spans 390 residues: Putative methylesterase 11, chloroplastic (390 aa).

A chloroplast-targeting transit peptide spans 1–46 (MGNLCSLFTPPKPVKKRKPITKRQSSIGASSSGSGLNSNRWNNRVR). Disordered regions lie at residues 1–52 (MGNL…SSRR) and 94–119 (QGSC…DPLL). A compositionally biased stretch (low complexity) spans 25–48 (SSIGASSSGSGLNSNRWNNRVRSS). Polar residues predominate over residues 94-104 (QGSCSKKNQLP). The span at 105 to 114 (RSSSSRSRSS) shows a compositional bias: low complexity. An AB hydrolase-1 domain is found at 137–241 (NHFVLVHGGS…KAVFLAAAML (105 aa)). Residue Asp213 is the Acyl-ester intermediate of the active site. Active-site charge relay system residues include Asp339 and His367.

The protein belongs to the AB hydrolase superfamily. Methylesterase family.

The protein resides in the plastid. It localises to the chloroplast. Putative methylesterase. This Arabidopsis thaliana (Mouse-ear cress) protein is Putative methylesterase 11, chloroplastic.